A 535-amino-acid polypeptide reads, in one-letter code: PAC-1 interacting and coiled-coil domain-containing protein 1 (535 aa).

Residues 1 to 67 (MIITTPRRAN…KQTPPRSPVI (67 aa)) are disordered. Low complexity predominate over residues 36–57 (SSTTPSSIGSSSSSSSSYASST). Coiled-coil stretches lie at residues 109 to 172 (KLQY…RDLS) and 198 to 242 (SLMK…RQSL). Disordered stretches follow at residues 254-277 (NESEDLGCGSSEQSGGSEGHNDEE) and 503-535 (TCRPTTTLISSTQPAQRSVSVEKNNNNNVHTHN). The span at 503–525 (TCRPTTTLISSTQPAQRSVSVEK) shows a compositional bias: polar residues. A compositionally biased stretch (low complexity) spans 526–535 (NNNNNVHTHN).

This sequence belongs to the CCDC85 family. As to quaternary structure, interacts with pac-1 and jac-1.

It localises to the cell junction. Its subcellular location is the adherens junction. Functionally, linker protein which helps to recruit the Rho GTPase-activating protein, pac-1, to adherens junctions. The sequence is that of PAC-1 interacting and coiled-coil domain-containing protein 1 from Caenorhabditis elegans.